The chain runs to 180 residues: ADP-ribosylation factor 5 (180 aa).

A lipid anchor (N-myristoyl glycine) is attached at G2. Residues 24–31 (GLDAAGKT), 67–71 (DVGGQ), and 126–129 (NKQD) each bind GTP.

This sequence belongs to the small GTPase superfamily. Arf family. In terms of assembly, interacts (when activated) with GGA1, GGA2 and GGA3; the interaction is required for proper subcellular location of GGA1, GGA2 and GGA3. Binds ASAP2. Interacts with NCS1/FREQ at the Golgi complex. Interacts with RAB11FIP3 and RAB11FIP4.

The protein localises to the golgi apparatus. Its subcellular location is the cytoplasm. The protein resides in the perinuclear region. It is found in the membrane. It localises to the trans-Golgi network membrane. GTP-binding protein involved in protein trafficking; may modulate vesicle budding and uncoating within the Golgi apparatus. In terms of biological role, (Microbial infection) Functions as an allosteric activator of the cholera toxin catalytic subunit, an ADP-ribosyltransferase. The sequence is that of ADP-ribosylation factor 5 (ARF5) from Homo sapiens (Human).